The following is a 401-amino-acid chain: Probable sodium/metabolite cotransporter BASS5, chloroplastic (401 aa).

The N-terminal 46 residues, 1-46 (MAPNAAVLVRPHIAGVHHLPTGRRLPRLAPPQAVSPPFSRQKGSVV), are a transit peptide targeting the chloroplast. The next 9 helical transmembrane spans lie at 93–113 (TIIPHVVLGSTILALVYPPSF), 122–142 (APALGFLMFAVGVNSSVKDFI), 159–179 (FIIKPFLGFLFGTLAVTIFNL), 185–205 (AGIMLVSCVSGAQLSNYATFL), 215–235 (IVMTSLSTATAVFVTPTLSYF), 247–267 (GMMSSIVQIVVAPIAAGLLLN), 273–293 (LCSAIQPFLPPLSVFVTALCV), 299–319 (INIKAVLSPFGLATVLLLFAF), and 372–392 (LVGVPPAISVVLMSLMGFALV).

This sequence belongs to the bile acid:sodium symporter (BASS) (TC 2.A.28) family.

It is found in the membrane. It localises to the plastid. The protein localises to the chloroplast envelope. Functionally, may function as sodium-coupled metabolite transporter across the chloroplast envelope. The polypeptide is Probable sodium/metabolite cotransporter BASS5, chloroplastic (BASS5) (Oryza sativa subsp. indica (Rice)).